A 257-amino-acid polypeptide reads, in one-letter code: NH(3)-dependent NAD(+) synthetase (257 aa).

40-47 is a binding site for ATP; that stretch reads GISGGIDS. D46 contacts Mg(2+). Deamido-NAD(+) is bound at residue R121. Residue T141 coordinates ATP. A Mg(2+)-binding site is contributed by E146. Positions 154 and 161 each coordinate deamido-NAD(+). ATP is bound by residues K170 and S192. Residue 238–239 coordinates deamido-NAD(+); it reads HK.

This sequence belongs to the NAD synthetase family. Homodimer.

The catalysed reaction is deamido-NAD(+) + NH4(+) + ATP = AMP + diphosphate + NAD(+) + H(+). Its pathway is cofactor biosynthesis; NAD(+) biosynthesis; NAD(+) from deamido-NAD(+) (ammonia route): step 1/1. Its function is as follows. Catalyzes the ATP-dependent amidation of deamido-NAD to form NAD. Uses ammonia as a nitrogen source. The chain is NH(3)-dependent NAD(+) synthetase from Mycoplasmopsis pulmonis (strain UAB CTIP) (Mycoplasma pulmonis).